The following is an 860-amino-acid chain: Pentatricopeptide repeat-containing protein At1g18900 (860 aa).

8 PPR repeats span residues 363 to 397 (DGHT…GCQP), 398 to 432 (NTVT…GCKP), 433 to 467 (DRVT…GLSP), 468 to 502 (DTFT…GCTP), 503 to 537 (NLVT…GFEP), 538 to 572 (DKVT…NWIP), 573 to 607 (DEPV…GLRP), and 608 to 642 (NVPT…GLRP). The region spanning 760–843 (INLHVMSEGT…NSGCFVGSGE (84 aa)) is the Smr domain.

The protein belongs to the PPR family. P subfamily.

In Arabidopsis thaliana (Mouse-ear cress), this protein is Pentatricopeptide repeat-containing protein At1g18900.